The following is a 310-amino-acid chain: HPr kinase/phosphorylase (310 aa).

Catalysis depends on residues His136 and Lys157. Gly151–Ser158 contacts ATP. Ser158 serves as a coordination point for Mg(2+). Asp175 functions as the Proton acceptor; for phosphorylation activity. Proton donor; for dephosphorylation activity in the catalytic mechanism. Positions Leu199–Asn208 are important for the catalytic mechanism of both phosphorylation and dephosphorylation. Glu200 contributes to the Mg(2+) binding site. The active site involves Arg241. Residues Pro262–Arg267 are important for the catalytic mechanism of dephosphorylation.

It belongs to the HPrK/P family. Homohexamer. The cofactor is Mg(2+).

It catalyses the reaction [HPr protein]-L-serine + ATP = [HPr protein]-O-phospho-L-serine + ADP + H(+). The enzyme catalyses [HPr protein]-O-phospho-L-serine + phosphate + H(+) = [HPr protein]-L-serine + diphosphate. Functionally, catalyzes the ATP- as well as the pyrophosphate-dependent phosphorylation of a specific serine residue in HPr, a phosphocarrier protein of the phosphoenolpyruvate-dependent sugar phosphotransferase system (PTS). HprK/P also catalyzes the pyrophosphate-producing, inorganic phosphate-dependent dephosphorylation (phosphorolysis) of seryl-phosphorylated HPr (P-Ser-HPr). The two antagonistic activities of HprK/P are regulated by several intracellular metabolites, which change their concentration in response to the absence or presence of rapidly metabolisable carbon sources (glucose, fructose, etc.) in the growth medium. Therefore, by controlling the phosphorylation state of HPr, HPrK/P is a sensor enzyme that plays a major role in the regulation of carbon metabolism and sugar transport: it mediates carbon catabolite repression (CCR), and regulates PTS-catalyzed carbohydrate uptake and inducer exclusion. The sequence is that of HPr kinase/phosphorylase from Staphylococcus epidermidis (strain ATCC 35984 / DSM 28319 / BCRC 17069 / CCUG 31568 / BM 3577 / RP62A).